A 185-amino-acid polypeptide reads, in one-letter code: Proton-translocating ferredoxin:NAD(+) oxidoreductase complex subunit G (185 aa).

The helical transmembrane segment at 14-34 (TKNLTITCFISGIIIAAVYYI) threads the bilayer. T161 carries the post-translational modification FMN phosphoryl threonine.

It belongs to the RnfG family. As to quaternary structure, the complex is composed of six subunits: RnfA, RnfB, RnfC, RnfD, RnfE and RnfG. It depends on FMN as a cofactor.

It is found in the cell membrane. Its function is as follows. Part of a membrane-bound complex that couples electron transfer with translocation of ions across the membrane. Couples electron transfer from reduced ferredoxin to NAD(+) with translocation of H(+) out of the cell. Essential for energy conservation during autotrophic growth. Contributes to ATP synthesis during heterotrophic growth. The polypeptide is Proton-translocating ferredoxin:NAD(+) oxidoreductase complex subunit G (Clostridium ljungdahlii (strain ATCC 55383 / DSM 13528 / PETC)).